A 112-amino-acid polypeptide reads, in one-letter code: UPF0102 protein JJD26997_0163 (112 aa).

It belongs to the UPF0102 family.

The chain is UPF0102 protein JJD26997_0163 from Campylobacter jejuni subsp. doylei (strain ATCC BAA-1458 / RM4099 / 269.97).